The sequence spans 555 residues: uncharacterized protein (555 aa).

ABC transporter domains lie at 4-244 (VKVK…PPYK) and 255-547 (IQVR…ARFM). ATP-binding positions include 36–43 (GKSGAGKS) and 292–299 (GPSGVGKT).

This sequence belongs to the ABC transporter superfamily.

This is an uncharacterized protein from Methanocaldococcus jannaschii (strain ATCC 43067 / DSM 2661 / JAL-1 / JCM 10045 / NBRC 100440) (Methanococcus jannaschii).